A 223-amino-acid chain; its full sequence is Urease accessory protein UreF (223 aa).

Belongs to the UreF family. As to quaternary structure, ureD, UreF and UreG form a complex that acts as a GTP-hydrolysis-dependent molecular chaperone, activating the urease apoprotein by helping to assemble the nickel containing metallocenter of UreC. The UreE protein probably delivers the nickel.

It is found in the cytoplasm. Required for maturation of urease via the functional incorporation of the urease nickel metallocenter. The chain is Urease accessory protein UreF from Pseudomonas paraeruginosa (strain DSM 24068 / PA7) (Pseudomonas aeruginosa (strain PA7)).